We begin with the raw amino-acid sequence, 67 residues long: Large ribosomal subunit protein uL29 (67 aa).

This sequence belongs to the universal ribosomal protein uL29 family.

The polypeptide is Large ribosomal subunit protein uL29 (Exiguobacterium sp. (strain ATCC BAA-1283 / AT1b)).